Here is a 1652-residue protein sequence, read N- to C-terminus: Venom factor (1652 aa).

An N-terminal signal peptide occupies residues Met1–Gly22. Pro519, Asp542, Val543, and Asp545 together coordinate Mg(2+). 12 disulfides stabilise this stretch: Cys547-Cys808, Cys616-Cys651, Cys684-Cys711, Cys685-Cys718, Cys698-Cys719, Cys864-Cys1502, Cys1347-Cys1478, Cys1378-Cys1447, Cys1495-Cys1500, Cys1507-Cys1579, Cys1526-Cys1650, and Cys1626-Cys1635. The propeptide occupies Arg657–Ser740. The C3a-like domain stretch occupies residues Arg661–Arg739. The Anaphylatoxin-like domain maps to Cys684–Cys719. Residues Glu743–Ser754 are factor B binding site. Positions His992–Tyr1270 are excised as a propeptide. Residues His992 to Tyr1270 are C3d-like domain. The isoglutamyl cysteine thioester (Cys-Gln) cross-link spans Cys1000 to Gln1003. A factor H binding site region spans residues Val1197–Thr1260. An NTR domain is found at Cys1507 to Cys1650.

Belongs to the venom complement C3 homolog family. Heterotrimer of alpha, beta and gamma chains; disulfide-linked. Is active with factor B in the presence of factor D. In terms of processing, first processed by the removal of 4 Arg residues by furin-type protease, forming two chains, alpha and gamma/beta precursor, linked by a disulfide bond. Probably, a cobrin-like protease cleaves the C3a-like domain and then the C3d-like domain, generating the mature venom factor (VF). Expressed by the venom gland.

The protein resides in the secreted. Its function is as follows. Complement-activating protein in venom. It is a structural and functional analog of complement component C3b, the activated form of C3. It binds factor B (CFB), which is subsequently cleaved by factor D (CFD) to form the bimolecular complex VF/Bb. VF/Bb is a C3/C5 convertase that cleaves both complement components C3 and C5. Structurally, it resembles the C3b degradation product C3c, which is not able to form a C3/C5 convertase. Unlike C3b/Bb, VF/Bb is a stable complex and completely resistant to the actions of complement regulatory factors H (CFH) and I (CFI). Therefore, VF continuously activates complement resulting in the depletion of complement activity. The polypeptide is Venom factor (Crotalus adamanteus (Eastern diamondback rattlesnake)).